An 853-amino-acid chain; its full sequence is ATP-dependent zinc metalloprotease FtsH (853 aa).

Residues 1–5 (MKNKK) are Cytoplasmic-facing. A helical transmembrane segment spans residues 6-26 (YLQFGGIAAVILIVLFLVSLF). Residues 27-113 (SSDTRNFQEV…SYTTNVTQES (87 aa)) lie on the Extracellular side of the membrane. Residues 114–134 (FLMSMLSFILPMVIIFGLLMF) traverse the membrane as a helical segment. The Cytoplasmic segment spans residues 135 to 853 (FLTRMQGGGM…NPENEGDNRG (719 aa)). 205–212 (GPPGTGKT) contributes to the ATP binding site. Position 427 (His-427) interacts with Zn(2+). The active site involves Glu-428. The Zn(2+) site is built by His-431 and Asp-503. Composition is skewed to basic and acidic residues over residues 619–632 (ESTR…REPV) and 639–648 (ALERGEEPPK). Positions 619–853 (ESTRFPRQEN…NPENEGDNRG (235 aa)) are disordered. Residues 677 to 695 (PASSAGVAPAAGAAAGSYG) are compositionally biased toward low complexity. Polar residues-rich tracts occupy residues 728-739 (TPAQAPEQSPDS) and 770-788 (MDQS…QESP). The span at 796-813 (LPDHERSDYPEKAQKESV) shows a compositional bias: basic and acidic residues.

In the central section; belongs to the AAA ATPase family. It in the C-terminal section; belongs to the peptidase M41 family. Homohexamer. Zn(2+) serves as cofactor.

It localises to the cell membrane. Functionally, acts as a processive, ATP-dependent zinc metallopeptidase for both cytoplasmic and membrane proteins. Plays a role in the quality control of integral membrane proteins. The protein is ATP-dependent zinc metalloprotease FtsH of Corynebacterium glutamicum (strain ATCC 13032 / DSM 20300 / JCM 1318 / BCRC 11384 / CCUG 27702 / LMG 3730 / NBRC 12168 / NCIMB 10025 / NRRL B-2784 / 534).